The primary structure comprises 1640 residues: MYFFTPPQKRTLKPVVDRVLQQQQQQQQQQQQQSLPKFQPFEVETYSLEDEKYLYNISYFSKEEIKLLYDLFHRINLDLDGFTENIIYQTLSFLVHIPSGIEELSSLFYNEDVIYRKEINSSHRSNQSFNHSNSTTPLNTTNNNIKKPTTTTTTNSNNINNNGNVNGNNTTNLDDILNNHNDNYSSDNSYLHNIYDDIYEDEDDEDDEDDDDDEDEDDEGKEFEQDDEDESTISSMSLKNSQAKRLSKKMNSIDLNVDEISSTHNQNHQNHQNHQNHHHHTTTHMIEKKITTTINKIKQKISNESSGLLCEVVGAGGAGTEGASSSTTTTTTLSNDLQTNESIKFVEDEKQQLKQQLRKQLLKDGNHNSLNNILYDYKHPNDINTPIEELTAAATTTTTTTSTTTTTNDHQNLEKTIISNKTIKKLEGVETIKDTVELEKQQQKQQQTSNVTTAKVKDTILSSSPKTTTTATTNNNNNNNNNNNNNNNNNNNNNSYKYNSYLESSNISNISNASYTDKPMDDEYYYGEYDDEDDSKPPSQEKIESINLYRSQFSIIRDCNLWGGKTLKEDEFDYIDSSSEILKYRMIIKYMVENLFSYIRKRYNLEANKNPSIIHLIEIISIMTRGTLKEKSELVFKLVRKKSEGVVYKTELLEMIQGIDALTVLNVFGLGSIGTPDEVVNNIYREGLSTVNSIQRTPSFPRSDSFYQKSMSSEQPFFKDTSLEMKEFIKRSVSNSDIPRCFGFFDLIYLCYIKPIEDYLKSSIKYKQASGYLYYEKYLGIIKAYSLRWFEVRSGFLIGYKRLFSKPSKVICLFKTNVKIIPKEHPKHHMKLKSLFKGSLSKQIDGNKEATDFVLRRFDDTEQTFISLSSHRASNFVNAIRENSKGSYRYHSFASPQEDINVVPYINGSTYFKGVYKALKHATSEIYIAGWWISPNVSLNRTATSKTPDKYRLDSVLMKKASEGVKIYILIWDETMIAMDLGSRGVKSFFEKMHRRNIKVIRHPHMLPLYWSHHQKVVVVDQRIAFIGGLDLCFGRYDNEYYFVKDNLEINFPGADYINSCIAKPVNNLKDCLVDRNTQPRMPWHDVSISLDGKAARDVTYNFIQRWNHAKDSNRDYKSYPYLITSLETPLNIPHPQPPTQFLHPNTNINNNNNNANNNTNNINNNNNNNNINNLNSSTNTTNNTNNTTTTTNNNNLNTSTNMLPINNNNNNLNTSTNILPNNNNNNNNNNNNNNNNNNNNNNNNNNINNNNTTSTTTTTTTNNNLNSSSNNLNFNISGEIHNNSLPHQLNNQQQQQHHHHHHHHYQPPLPPQQRGTCKVQIVRSVCGWSAGQVLENSIYKAYLNLINLSQHFIYIQNQFFISSVGFTQPNNQIAFAIYKRIEKAVLLNQVFRVILLLPVHCEGDIYDVDTQLIIKYTEKSITGIKTELLKKFPEMDIDQYLSINSLRNWDANGDIIFTEQIYVHSKVLIVDDKIAIIGSANINDRSLNGSRDSEICAIIEDRDLVDSRVNGLPYKAAKFAHNLRCNLWEYHLGLISNPDPLLSDRIKDLVIDSTYHDIWRNMAQRNSAIYKEIFGTTIPENCTKTSQYNRGSIKLTSEALETLCGINGFLIEYNTSMLSELETPTSIYSDIITSMKLFL.

Residues 122–132 (SHRSNQSFNHS) show a composition bias toward polar residues. Disordered regions lie at residues 122–247 (SHRS…KRLS), 264–283 (HNQN…HTTT), 439–499 (EKQQ…YKYN), and 521–541 (DDEY…PSQE). A compositionally biased stretch (low complexity) spans 133–193 (NSTTPLNTTN…YSSDNSYLHN (61 aa)). Over residues 197-231 (DIYEDEDDEDDEDDDDDEDEDDEGKEFEQDDEDES) the composition is skewed to acidic residues. The span at 232 to 247 (TISSMSLKNSQAKRLS) shows a compositional bias: polar residues. Low complexity-rich tracts occupy residues 264-273 (HNQNHQNHQN) and 467-499 (TTTT…YKYN). Over residues 521 to 534 (DDEYYYGEYDDEDD) the composition is skewed to acidic residues. The region spanning 1009–1036 (LYWSHHQKVVVVDQRIAFIGGLDLCFGR) is the PLD phosphodiesterase 1 domain. Catalysis depends on residues His1014, Lys1016, and Asp1021. Low complexity-rich tracts occupy residues 1149-1274 (INNN…NNLN) and 1282-1296 (HNNS…QQQQ). The tract at residues 1149-1315 (INNNNNNANN…YQPPLPPQQR (167 aa)) is disordered. Basic residues predominate over residues 1297 to 1306 (QHHHHHHHHY). The PLD phosphodiesterase 2 domain maps to 1460–1487 (EQIYVHSKVLIVDDKIAIIGSANINDRS). Active-site residues include His1465, Lys1467, and Asp1472.

This sequence belongs to the phospholipase D family.

The enzyme catalyses a 1,2-diacyl-sn-glycero-3-phosphocholine + H2O = a 1,2-diacyl-sn-glycero-3-phosphate + choline + H(+). With respect to regulation, inhibited by butan-1-ol. In terms of biological role, plays a role in cell growth. Hydrolyzes membrane phospholipids, such as PtdCho (phosphatidylcholine), producing the free headgroup and PtdOH (phosphatidic acid; signaling molecule on its own). Involved in the inhibition of actin-based motility and endocytosis. Its inhibition causes complete collapse of F-actin organization. This Dictyostelium discoideum (Social amoeba) protein is Phospholipase D C (pldC).